Here is a 405-residue protein sequence, read N- to C-terminus: MGEILSVKDIKFKKGEKVFIRCDFNVPMDEFLNITDDRRIRAAIPTIRYCLDEGCSVILASHLGRPKNGYEAKFSLEPVAKRLARRMNREIKFVNDVIGKEAVEAVKNLKENEVLLLDNLRFEKGETKNDPEFAQKLASYANYYINDAFGVCHRAHASVEAITKFYDNKHKAAGFLLIKEVNFAANLTKRPVRPFVAVAGGSKVSGKLQALKNLLPKVDKLIIGGGMAFTFLKAIGYEIGNSLLEEDLVEEALNILREGKRLGVKIYIPVDAIVAPAISQDSVMKNVTVQEIPAGWMGLDIGPATIALFREALSDAQTIWWNGPMGVFEIDKFARGSLRMSHAIAESNATTVVGGGDTADVVERAGNSDEMTFISTGGGASLELIEGKELPGVRVLTIKNDEMEC.

Substrate is bound by residues 23–25, Arg39, 62–65, Arg121, and Arg154; these read DFN and HLGR. ATP is bound by residues Lys207, Gly298, Glu329, and 355 to 358; that span reads GGDT.

Belongs to the phosphoglycerate kinase family. Monomer.

It is found in the cytoplasm. It catalyses the reaction (2R)-3-phosphoglycerate + ATP = (2R)-3-phospho-glyceroyl phosphate + ADP. Its pathway is carbohydrate degradation; glycolysis; pyruvate from D-glyceraldehyde 3-phosphate: step 2/5. The polypeptide is Phosphoglycerate kinase (Campylobacter hominis (strain ATCC BAA-381 / DSM 21671 / CCUG 45161 / LMG 19568 / NCTC 13146 / CH001A)).